The sequence spans 473 residues: Photosystem II CP43 reaction center protein (473 aa).

Positions M1 to E14 are excised as a propeptide. Residue T15 is modified to N-acetylthreonine. T15 is modified (phosphothreonine). Transmembrane regions (helical) follow at residues L69–A93, L134–N155, K178–T200, K255–S275, and W291–A312. Residue E367 participates in [CaMn4O5] cluster binding. The helical transmembrane segment at R447–P471 threads the bilayer.

This sequence belongs to the PsbB/PsbC family. PsbC subfamily. As to quaternary structure, PSII is composed of 1 copy each of membrane proteins PsbA, PsbB, PsbC, PsbD, PsbE, PsbF, PsbH, PsbI, PsbJ, PsbK, PsbL, PsbM, PsbT, PsbX, PsbY, PsbZ, Psb30/Ycf12, at least 3 peripheral proteins of the oxygen-evolving complex and a large number of cofactors. It forms dimeric complexes. Binds multiple chlorophylls and provides some of the ligands for the Ca-4Mn-5O cluster of the oxygen-evolving complex. It may also provide a ligand for a Cl- that is required for oxygen evolution. PSII binds additional chlorophylls, carotenoids and specific lipids. serves as cofactor.

Its subcellular location is the plastid. It localises to the chloroplast thylakoid membrane. In terms of biological role, one of the components of the core complex of photosystem II (PSII). It binds chlorophyll and helps catalyze the primary light-induced photochemical processes of PSII. PSII is a light-driven water:plastoquinone oxidoreductase, using light energy to abstract electrons from H(2)O, generating O(2) and a proton gradient subsequently used for ATP formation. The polypeptide is Photosystem II CP43 reaction center protein (Coffea arabica (Arabian coffee)).